A 757-amino-acid polypeptide reads, in one-letter code: Receptor protein kinase-like protein At4g34220 (757 aa).

Residues 1–26 (MTSNRSNLLFSLVLFHFLFVPTQLQA) form the signal peptide. 7 LRR repeats span residues 104-126 (YLRI…VFNA), 128-150 (ELQS…VNSV), 152-174 (NLQL…ISLL), 176-198 (NLTV…FEAA), 199-219 (QILD…LGGK), 220-242 (SLHY…FAEK), and 245-267 (ANAT…LSLL). Residues 339-359 (IAAITVADIVGLAFIGLLVLY) form a helical membrane-spanning segment. A Protein kinase domain is found at 471–753 (KASAYILGTT…KELVQVLEKI (283 aa)). Ser473 carries the post-translational modification Phosphoserine. Thr494 is modified (phosphothreonine). Ser553 is subject to Phosphoserine. The segment at 633–654 (ARESHTTGPTSSSPYQPPEWST) is disordered. 2 positions are modified to phosphothreonine: Thr638 and Thr639. Residues 638-654 (TTGPTSSSPYQPPEWST) show a composition bias toward polar residues.

This sequence belongs to the protein kinase superfamily.

The protein resides in the membrane. The sequence is that of Receptor protein kinase-like protein At4g34220 from Arabidopsis thaliana (Mouse-ear cress).